We begin with the raw amino-acid sequence, 446 residues long: Exodeoxyribonuclease 7 large subunit (446 aa).

Belongs to the XseA family. As to quaternary structure, heterooligomer composed of large and small subunits.

It is found in the cytoplasm. It carries out the reaction Exonucleolytic cleavage in either 5'- to 3'- or 3'- to 5'-direction to yield nucleoside 5'-phosphates.. Its function is as follows. Bidirectionally degrades single-stranded DNA into large acid-insoluble oligonucleotides, which are then degraded further into small acid-soluble oligonucleotides. This chain is Exodeoxyribonuclease 7 large subunit, found in Streptococcus pyogenes serotype M49 (strain NZ131).